The sequence spans 485 residues: Protein nucleotidyltransferase YdiU (485 aa).

ATP contacts are provided by glycine 100, glycine 102, arginine 103, lysine 123, aspartate 135, glycine 136, arginine 189, and arginine 196. The Proton acceptor role is filled by aspartate 265. Mg(2+) contacts are provided by asparagine 266 and aspartate 275. ATP is bound at residue aspartate 275.

The protein belongs to the SELO family. It depends on Mg(2+) as a cofactor. Requires Mn(2+) as cofactor.

The catalysed reaction is L-seryl-[protein] + ATP = 3-O-(5'-adenylyl)-L-seryl-[protein] + diphosphate. It carries out the reaction L-threonyl-[protein] + ATP = 3-O-(5'-adenylyl)-L-threonyl-[protein] + diphosphate. The enzyme catalyses L-tyrosyl-[protein] + ATP = O-(5'-adenylyl)-L-tyrosyl-[protein] + diphosphate. It catalyses the reaction L-histidyl-[protein] + UTP = N(tele)-(5'-uridylyl)-L-histidyl-[protein] + diphosphate. The catalysed reaction is L-seryl-[protein] + UTP = O-(5'-uridylyl)-L-seryl-[protein] + diphosphate. It carries out the reaction L-tyrosyl-[protein] + UTP = O-(5'-uridylyl)-L-tyrosyl-[protein] + diphosphate. Its function is as follows. Nucleotidyltransferase involved in the post-translational modification of proteins. It can catalyze the addition of adenosine monophosphate (AMP) or uridine monophosphate (UMP) to a protein, resulting in modifications known as AMPylation and UMPylation. The polypeptide is Protein nucleotidyltransferase YdiU (Trichormus variabilis (strain ATCC 29413 / PCC 7937) (Anabaena variabilis)).